The primary structure comprises 294 residues: tRNA dimethylallyltransferase (294 aa).

11 to 18 (GPTAVGKT) lines the ATP pocket. 13–18 (TAVGKT) is a binding site for substrate. Residues 36 to 39 (DSQQ) form an interaction with substrate tRNA region.

The protein belongs to the IPP transferase family. As to quaternary structure, monomer. The cofactor is Mg(2+).

It carries out the reaction adenosine(37) in tRNA + dimethylallyl diphosphate = N(6)-dimethylallyladenosine(37) in tRNA + diphosphate. Functionally, catalyzes the transfer of a dimethylallyl group onto the adenine at position 37 in tRNAs that read codons beginning with uridine, leading to the formation of N6-(dimethylallyl)adenosine (i(6)A). This Lactococcus lactis subsp. cremoris (strain SK11) protein is tRNA dimethylallyltransferase.